We begin with the raw amino-acid sequence, 102 residues long: Protein translation factor SUI1 homolog (102 aa).

The protein belongs to the SUI1 family.

This Methanococcus maripaludis (strain C5 / ATCC BAA-1333) protein is Protein translation factor SUI1 homolog.